The primary structure comprises 322 residues: Arginase (322 aa).

The Mn(2+) site is built by histidine 113, aspartate 141, histidine 143, and aspartate 145. Substrate is bound by residues 143–147, 154–156, and aspartate 200; these read HADIN and SGN. The Mn(2+) site is built by aspartate 247 and aspartate 249. 2 residues coordinate substrate: threonine 261 and glutamate 292.

It belongs to the arginase family. Homotrimer. The cofactor is Mn(2+).

It catalyses the reaction L-arginine + H2O = urea + L-ornithine. Its pathway is nitrogen metabolism; urea cycle; L-ornithine and urea from L-arginine: step 1/1. The sequence is that of Arginase (ARG) from Coccidioides immitis (strain RS) (Valley fever fungus).